Consider the following 1264-residue polypeptide: Protein fantom (1264 aa).

4 coiled-coil regions span residues 64–143 (LKQH…LQVQ), 196–268 (YSNS…NVET), 299–454 (LRIS…ESDI), and 488–555 (NKDL…VHLL). 2 C2 domains span residues 577–714 (KQYK…FCTT) and 773–897 (AATT…SGIF). Disordered stretches follow at residues 979–1018 (DTISHPSPETSPPPKDIKDSSPEVGPKPENGLSAVAYPSK) and 1047–1093 (QLAS…NTKQ). Residues 1056–1080 (SEDETEITEELEPEDEDRSASDSDD) are compositionally biased toward acidic residues.

This sequence belongs to the RPGRIP1 family. As to quaternary structure, interacts with NPHP4 and NPHP1; NPHP1, NPHP4 and RPGRIP1L are proposed to form a functional NPHP1-4-8 module localized to cell-cell contacts and the ciliary transition zone; NPHP4 mediates the interaction between NPHP1 and RPGRIP1L. Interacts with IQCB1; the interaction likely requires additional interactors. Interacts with TBXA2R (via C-terminus), RPGR, NEK4. Interacts with NPHP4, INVS and DVL2; proposed to form a complex involved in DVL2 stabilization. Interacts with PSMD2. Ubiquitously expressed. Not found in heart and skin.

Its subcellular location is the cytoplasm. It localises to the cytoskeleton. The protein resides in the cilium basal body. It is found in the cilium axoneme. The protein localises to the microtubule organizing center. Its subcellular location is the centrosome. It localises to the cell junction. The protein resides in the tight junction. Its function is as follows. Negatively regulates signaling through the G-protein coupled thromboxane A2 receptor (TBXA2R). May be involved in mechanisms like programmed cell death, craniofacial development, patterning of the limbs, and formation of the left-right axis. Involved in the organization of apical junctions; the function is proposed to implicate a NPHP1-4-8 module. Does not seem to be strictly required for ciliogenesis. Involved in establishment of planar cell polarity such as in cochlear sensory epithelium and is proposed to implicate stabilization of disheveled proteins. Involved in regulation of proteasomal activity at the primary cilium probably implicating association with PSDM2. The sequence is that of Protein fantom (Rpgrip1l) from Mus musculus (Mouse).